We begin with the raw amino-acid sequence, 338 residues long: MPKPQSKRSSLPNYIKSRGELIASLQALLANDHVDLEILRSGVPWPSATEIVQLSQVSESNEDAPVAACHSSNEPVVVDPALGDDSHQAHIDLDVNWLSNLIPYNGDELSEQPDSSLFCSPPERMSVSDSSNNTDYLSHFSSSSICQWDNLLDSIGSQTFQDTINVLSPHCQDSGVSQPSNLADDTLGQGQPVSTVVQPQHPGSTERDESVSSIASSQESPRKRQRPHYAIEKRYRAGLQERFEALRDCVASLKKTQHEQRLPGTNEDLAEGDDGGSVSDRATVGRMNKAEVLNQATLCIRQLQEENEVVMEYIKLLIKQFRVMKQAMQQALKVDINS.

Disordered stretches follow at residues 171-230 (CQDS…PHYA) and 256-277 (TQHE…DGGS). Polar residues predominate over residues 174–203 (SGVSQPSNLADDTLGQGQPVSTVVQPQHPG). The segment at 223-236 (KRQRPHYAIEKRYR) is basic motif. One can recognise a bHLH domain in the interval 223-303 (KRQRPHYAIE…NQATLCIRQL (81 aa)). Positions 237–303 (AGLQERFEAL…NQATLCIRQL (67 aa)) are helix-loop-helix motif.

The protein localises to the nucleus. Its function is as follows. Transcription factor that specifically regulates the expression of the gene cluster that mediates the biosynthesis of gramillins A and B, bicyclic lipopeptides that induce cell death in maize leaves but not in wheat leaves. The polypeptide is Transcription factor GRA2 (GRA2) (Gibberella zeae (strain ATCC MYA-4620 / CBS 123657 / FGSC 9075 / NRRL 31084 / PH-1) (Wheat head blight fungus)).